The following is a 1002-amino-acid chain: Eukaryotic translation initiation factor 5B (1002 aa).

2 disordered regions span residues Met1–Ala172 and Glu184–Asp402. Positions Trp13–Gln23 are enriched in acidic residues. A compositionally biased stretch (polar residues) spans Ile27–Ser37. Residues Glu47–Ala57 show a composition bias toward low complexity. Composition is skewed to basic and acidic residues over residues Lys75 to Ala111 and Gln120 to Lys154. Over residues Pro155 to Ala172 the composition is skewed to low complexity. Basic and acidic residues-rich tracts occupy residues Glu184–Arg252 and Ala267–Pro276. Positions Lys277–Arg287 are enriched in basic residues. Positions Ile297 to Glu306 are enriched in basic and acidic residues. Composition is skewed to acidic residues over residues Val307–Gln342 and Asp352–Glu370. The span at Ser381–Pro398 shows a compositional bias: low complexity. Positions Leu403–Ser621 constitute a tr-type G domain. Residue Ser405 is modified to Phosphoserine. A G1 region spans residues Gly412–Thr419. Asp415 lines the K(+) pocket. Asp415 provides a ligand contact to Na(+). GTP is bound by residues Asp415 to Lys420, Gln431, and Gly437 to Thr439. Thr419 is a Mg(2+) binding site. Gly437 is a binding site for K(+). Gly437 is a Na(+) binding site. The tract at residues Gly437–Gln441 is G2. Thr439 contacts Mg(2+). Residues Asp476–Gly479 are G3. Residues Asn530–Asp533 and Ala599–Val600 contribute to the GTP site. Positions Asn530–Asp533 are G4. Residues Ser598–Val600 form a G5 region.

It belongs to the TRAFAC class translation factor GTPase superfamily. Classic translation factor GTPase family. IF-2 subfamily. It depends on Na(+) as a cofactor. Requires K(+) as cofactor.

The protein resides in the cytoplasm. The catalysed reaction is GTP + H2O = GDP + phosphate + H(+). In terms of biological role, plays a role in translation initiation. Translational GTPase that catalyzes the joining of the 40S and 60S subunits to form the 80S initiation complex with the initiator methionine-tRNA in the P-site base paired to the start codon. GTP binding and hydrolysis induces conformational changes in the enzyme that renders it active for productive interactions with the ribosome. The release of the enzyme after formation of the initiation complex is a prerequisite to form elongation-competent ribosomes. Stimulates 20S pre-rRNA cleavage to mature 18S rRNA by PIN-domain endonuclease NOB1. The chain is Eukaryotic translation initiation factor 5B from Saccharomyces cerevisiae (strain ATCC 204508 / S288c) (Baker's yeast).